The chain runs to 89 residues: Long neurotoxin 1 (89 aa).

Residues 1 to 21 (MKTLLLTLVVVTIVCLDLGDS) form the signal peptide. 4 disulfide bridges follow: C24/C41, C34/C58, C62/C74, and C75/C80.

It belongs to the three-finger toxin family. Long-chain subfamily. Type II alpha-neurotoxin sub-subfamily. In terms of tissue distribution, expressed by the venom gland.

Its subcellular location is the secreted. Binds with high affinity to muscular (alpha-1/CHRNA1) and neuronal (alpha-7/CHRNA7) nicotinic acetylcholine receptor (nAChR) and inhibits acetylcholine from binding to the receptor, thereby impairing neuromuscular and neuronal transmission. In Pseudonaja textilis (Eastern brown snake), this protein is Long neurotoxin 1.